The chain runs to 445 residues: Phosphoglucosamine mutase (445 aa).

Residue Ser-102 is the Phosphoserine intermediate of the active site. Residues Ser-102, Asp-241, Asp-243, and Asp-245 each coordinate Mg(2+). The residue at position 102 (Ser-102) is a Phosphoserine.

Belongs to the phosphohexose mutase family. Mg(2+) serves as cofactor. In terms of processing, activated by phosphorylation.

The catalysed reaction is alpha-D-glucosamine 1-phosphate = D-glucosamine 6-phosphate. In terms of biological role, catalyzes the conversion of glucosamine-6-phosphate to glucosamine-1-phosphate. This chain is Phosphoglucosamine mutase, found in Shewanella sp. (strain W3-18-1).